A 283-amino-acid chain; its full sequence is MRTQWPSPAKLNLFLYITGQRADGYHTLQTLFQFLDYGDTINIELRDDGDIRLLTPVEGVEHEDNLIVRAARLLMKTAADSGRLPTGSGANISIDKRLPMGGGLGGGSSNAATVLVALNHLWQCGLSMDELAEMGLTLGADVPVFVRGHAAFAEGVGEILTPVDPPEKWYLVAHPGVSIPTPVIFKDPELPRNTPKRSIETLLKCEFSNDCEVIARKRFREVDAVLSWLLEYAPSRLTGTGACVFAEFDTESEARQVLEQAPEWLNGFVAKGVNLSPLHRAML.

Residue lysine 10 is part of the active site. ATP is bound at residue proline 99–serine 109. Residue aspartate 141 is part of the active site.

The protein belongs to the GHMP kinase family. IspE subfamily. Homodimer.

It carries out the reaction 4-CDP-2-C-methyl-D-erythritol + ATP = 4-CDP-2-C-methyl-D-erythritol 2-phosphate + ADP + H(+). The protein operates within isoprenoid biosynthesis; isopentenyl diphosphate biosynthesis via DXP pathway; isopentenyl diphosphate from 1-deoxy-D-xylulose 5-phosphate: step 3/6. Its function is as follows. Catalyzes the phosphorylation of the position 2 hydroxy group of 4-diphosphocytidyl-2C-methyl-D-erythritol. In Escherichia coli O7:K1 (strain IAI39 / ExPEC), this protein is 4-diphosphocytidyl-2-C-methyl-D-erythritol kinase.